The following is a 305-amino-acid chain: Nucleotide-binding protein Saro_2904 (305 aa).

15–22 (GLLGAGKT) serves as a coordination point for ATP. 68-71 (DTRT) lines the GTP pocket.

It belongs to the RapZ-like family.

In terms of biological role, displays ATPase and GTPase activities. This is Nucleotide-binding protein Saro_2904 from Novosphingobium aromaticivorans (strain ATCC 700278 / DSM 12444 / CCUG 56034 / CIP 105152 / NBRC 16084 / F199).